The primary structure comprises 291 residues: Sesquiterpene cyclase astC (291 aa).

It belongs to the HAD-like hydrolase superfamily.

The catalysed reaction is (2E,6E)-farnesyl diphosphate = (S,S)-drim-8-en-11-yl diphosphate. The protein operates within secondary metabolite biosynthesis; terpenoid biosynthesis. Sesquiterpene cyclase; part of the gene cluster that mediates the biosynthesis of astellolides, drimane-type sesquiterpene esters that show antimicrobial, anti-inflammatory, and anti-tumor activities. The first step in astellolide biosynthesis is performed by the sesquiterpene cyclase astC that catalyzes the formation of drimanyl pyrophosphate from farnesyl pyrophosphate. Drimanyl pyrophosphate is then dephosphorylated by the sesquiterpene phosphatase astI to produce drimanyl monophosphate which is further dephosphorylated to drim-8-ene-11-ol by atsK. Drim-8-ene-11-ol is converted to confertifolin, probably by the cytochrome P450 monooxygenase astD and/or the dehydrogenase astE. The cytochrome P450 monooxygenases astB, astF and astJ then hydroxylate confertifolin at C6, C14, or C15 to form trihydroxy confertifolin. The nonribosomal peptide synthetase astA catalyzes ester bond formation between trihydroxy contifolin and benzoic acid (BA) or 4-hydroxy benzoic acid (4HBA), leading to the formation of dideacetyl astellolides A and B, respectively. Finally, the O-acetyltransferase astG converts dideacetyl astellolides A and B into deacetyl astellolides A and B. The sequence is that of Sesquiterpene cyclase astC from Aspergillus oryzae (strain ATCC 42149 / RIB 40) (Yellow koji mold).